The following is a 194-amino-acid chain: Leucyl/phenylalanyl-tRNA--protein transferase (194 aa).

It belongs to the L/F-transferase family.

It is found in the cytoplasm. The catalysed reaction is N-terminal L-lysyl-[protein] + L-leucyl-tRNA(Leu) = N-terminal L-leucyl-L-lysyl-[protein] + tRNA(Leu) + H(+). It catalyses the reaction N-terminal L-arginyl-[protein] + L-leucyl-tRNA(Leu) = N-terminal L-leucyl-L-arginyl-[protein] + tRNA(Leu) + H(+). The enzyme catalyses L-phenylalanyl-tRNA(Phe) + an N-terminal L-alpha-aminoacyl-[protein] = an N-terminal L-phenylalanyl-L-alpha-aminoacyl-[protein] + tRNA(Phe). Functions in the N-end rule pathway of protein degradation where it conjugates Leu, Phe and, less efficiently, Met from aminoacyl-tRNAs to the N-termini of proteins containing an N-terminal arginine or lysine. In Pelodictyon phaeoclathratiforme (strain DSM 5477 / BU-1), this protein is Leucyl/phenylalanyl-tRNA--protein transferase.